A 254-amino-acid chain; its full sequence is Probable 2,4-dienoyl-CoA reductase [(2E)-enoyl-CoA-producing] (254 aa).

6 to 38 serves as a coordination point for NADP(+); it reads VIITGGSSGMGKAMAKKQAELGWHVMVTGRNHE. Thr100 lines the substrate pocket. Tyr142 acts as the Proton acceptor in catalysis. Residue Lys157 coordinates NAD(+).

Belongs to the short-chain dehydrogenases/reductases (SDR) family. 2,4-dienoyl-CoA reductase subfamily.

The catalysed reaction is a 4,5-saturated-(2E)-enoyl-CoA + NADP(+) = a (2E,4E)-dienoyl-CoA + NADPH + H(+). It catalyses the reaction a (2E,4Z)-dienoyl-CoA + NADPH + H(+) = a 4,5-saturated-(2E)-enoyl-CoA + NADP(+). It participates in lipid metabolism; fatty acid beta-oxidation. Functionally, auxiliary enzyme of beta-oxidation. It participates in the metabolism of unsaturated fatty enoyl-CoA esters having double bonds in both even- and odd-numbered positions. Catalyzes the NADP-dependent reduction of 2,4-dienoyl-CoA to yield trans-3-enoyl-CoA. The polypeptide is Probable 2,4-dienoyl-CoA reductase [(2E)-enoyl-CoA-producing] (fadH) (Bacillus subtilis (strain 168)).